Reading from the N-terminus, the 30-residue chain is Conotoxin Bt12.1 (30 aa).

Contains 3 disulfide bonds. In terms of tissue distribution, expressed by the venom duct.

Its subcellular location is the secreted. This Conus betulinus (Beech cone) protein is Conotoxin Bt12.1.